The following is a 614-amino-acid chain: Baeyer-Villiger monooxygenase peniC (614 aa).

FAD contacts are provided by residues E99, 107-110, D119, and Y125; that span reads TWHW. NADP(+) is bound by residues 255-261, 278-279, and 398-399; these read TGASGVQ, RT, and KR.

It belongs to the FAD-binding monooxygenase family. It depends on FAD as a cofactor.

The enzyme catalyses gamma-lactone-2-keto[5.5.5.5]fenestrane + NADPH + O2 + H(+) = penifulvin A + NADP(+) + H2O. It participates in secondary metabolite biosynthesis; terpenoid biosynthesis. Baeyer-Villiger monooxygenase; part of the gene cluster that mediates the biosynthesis of penifulvin A, a potent insecticidal sesquiterpene that features a [5.5.5.6]dioxafenestrane ring. Within the pathway, peniC is responsible for the final regioselective Baeyer-Villiger oxidation of gamma-lactone-2-keto[5.5.5.5]fenestran between C1 and C2 to form the delta-lactone moiety of penifulvin A. The first step of the pathway is performed by the sesquiterpene cyclase peniA that generates the angular triquinane scaffold silphinene via cyclization of the linear farnesyl pyrophosphate (FPP). The cytochrome P450 monooxygenase peniB and the flavin-dependent monooxygenase peniC then catalyze a series of oxidation reactions to transform silphinene into penifulvin A. The sequence is that of Baeyer-Villiger monooxygenase peniC from Penicillium patulum (Penicillium griseofulvum).